A 314-amino-acid polypeptide reads, in one-letter code: tRNA dimethylallyltransferase (314 aa).

12 to 19 serves as a coordination point for ATP; that stretch reads GPTASGKT. 14–19 contributes to the substrate binding site; the sequence is TASGKT. Interaction with substrate tRNA stretches follow at residues 37 to 40 and 161 to 165; these read DSAQ and QRIQR.

Belongs to the IPP transferase family. In terms of assembly, monomer. Requires Mg(2+) as cofactor.

It carries out the reaction adenosine(37) in tRNA + dimethylallyl diphosphate = N(6)-dimethylallyladenosine(37) in tRNA + diphosphate. Catalyzes the transfer of a dimethylallyl group onto the adenine at position 37 in tRNAs that read codons beginning with uridine, leading to the formation of N6-(dimethylallyl)adenosine (i(6)A). In Nitrosococcus oceani (strain ATCC 19707 / BCRC 17464 / JCM 30415 / NCIMB 11848 / C-107), this protein is tRNA dimethylallyltransferase.